The primary structure comprises 196 residues: Fucoxanthin-chlorophyll a-c binding protein A, chloroplastic (196 aa).

The transit peptide at Met1–Met31 directs the protein to the chloroplast. Helical transmembrane passes span Ile73–Ile94, Val114–Met134, and Gly174–Pro196.

Belongs to the fucoxanthin chlorophyll protein family. In terms of assembly, the LHC complex of chromophytic algae is composed of fucoxanthin, chlorophyll A and C bound non-covalently by fucoxanthin chlorophyll proteins (FCPs). The ratio of the pigments in LHC; fucoxanthin: chlorophyll C: chlorophyll A; (0.6-1): (0.1-0.3): (1).

The protein localises to the plastid. It localises to the chloroplast thylakoid membrane. Functionally, the light-harvesting complex (LHC) functions as a light receptor, it captures and delivers excitation energy to photosystems with which it is closely associated. Energy is transferred from the carotenoid and chlorophyll C (or B) to chlorophyll A and the photosynthetic reaction centers where it is used to synthesize ATP and reducing power. This chain is Fucoxanthin-chlorophyll a-c binding protein A, chloroplastic (FCPA), found in Phaeodactylum tricornutum (Diatom).